We begin with the raw amino-acid sequence, 378 residues long: Cytochrome b (378 aa).

A run of 4 helical transmembrane segments spans residues 33-53 (FGSL…FLAM), 77-98 (WMIR…FLHT), 113-133 (WNIG…GYVL), and 178-198 (FFTF…IHLL). Heme b is bound by residues His83 and His97. His182 and His196 together coordinate heme b. An a ubiquinone-binding site is contributed by His201. 4 consecutive transmembrane segments (helical) span residues 226 to 246 (TKDI…TLFT), 288 to 308 (LGGV…PATH), 320 to 340 (ITQI…WIGG), and 347 to 366 (FEAI…TLIP).

This sequence belongs to the cytochrome b family. In terms of assembly, the cytochrome bc1 complex contains 11 subunits: 3 respiratory subunits (MT-CYB, CYC1 and UQCRFS1), 2 core proteins (UQCRC1 and UQCRC2) and 6 low-molecular weight proteins (UQCRH/QCR6, UQCRB/QCR7, UQCRQ/QCR8, UQCR10/QCR9, UQCR11/QCR10 and a cleavage product of UQCRFS1). This cytochrome bc1 complex then forms a dimer. Heme b is required as a cofactor.

Its subcellular location is the mitochondrion inner membrane. Component of the ubiquinol-cytochrome c reductase complex (complex III or cytochrome b-c1 complex) that is part of the mitochondrial respiratory chain. The b-c1 complex mediates electron transfer from ubiquinol to cytochrome c. Contributes to the generation of a proton gradient across the mitochondrial membrane that is then used for ATP synthesis. This Cebus albifrons (White-fronted capuchin) protein is Cytochrome b (MT-CYB).